Consider the following 30-residue polypeptide: Dermaseptin-J10 (30 aa).

Expressed by the skin glands.

The protein localises to the secreted. Its function is as follows. Has antimicrobial activity. This is Dermaseptin-J10 from Phasmahyla jandaia (Jandaia leaf frog).